Consider the following 282-residue polypeptide: Undecaprenyl-diphosphatase (282 aa).

7 helical membrane-spanning segments follow: residues 40–60 (GAAFTAIVQIGTLAAVLIYFM), 89–109 (WMIAAGTIPIVVFGLAFKDDI), 113–133 (LRSLYWVSAALIALALVLSIA), 150–170 (ISEITWLDAMIIGFAQAMALI), 196–216 (FSFLLSLPSVFAAGIYQLYKT), 230–250 (IAVATVFAFIFGYLSIAFLLT), and 258–278 (GIFIGYRLLLGISLIIMIGTG).

It belongs to the UppP family.

The protein resides in the cell inner membrane. The enzyme catalyses di-trans,octa-cis-undecaprenyl diphosphate + H2O = di-trans,octa-cis-undecaprenyl phosphate + phosphate + H(+). In terms of biological role, catalyzes the dephosphorylation of undecaprenyl diphosphate (UPP). Confers resistance to bacitracin. The polypeptide is Undecaprenyl-diphosphatase (Chlorobaculum parvum (strain DSM 263 / NCIMB 8327) (Chlorobium vibrioforme subsp. thiosulfatophilum)).